Consider the following 505-residue polypeptide: Betaine aldehyde dehydrogenase 1 (505 aa).

Betaine aldehyde is bound at residue 163–172; it reads WNYPLLMATW. An NAD(+)-binding site is contributed by 240-245; sequence GSTETG. Betaine aldehyde contacts are provided by residues Glu-262, 294 to 297, and Cys-455; that span reads QVCS. Catalysis depends on residues Glu-262 and Cys-296. 4-aminobutanal-binding positions include 262 to 263 and Cys-296; that span reads EL. Trp-461 serves as a coordination point for 4-aminobutanal. The Microbody targeting signal motif lies at 503–505; that stretch reads SKL.

It belongs to the aldehyde dehydrogenase family. Homodimer.

It localises to the peroxisome. The enzyme catalyses betaine aldehyde + NAD(+) + H2O = glycine betaine + NADH + 2 H(+). Its pathway is amine and polyamine biosynthesis; betaine biosynthesis via choline pathway; betaine from betaine aldehyde: step 1/1. Dehydrogenase that can use N-acetyl-gamma-aminobutyraldehyde (NAGABald), gamma-guanidinobutyraldehyde (GGBald), betaine aldehyde (Bet-ald), gamma-aminobutyraldehyde (GAB-ald), acetaldehyde, 4-aminobutylaldehyde (AB-ald), 3-aminopropionaldehyde (AP-ald), 4-N-trimethylaminobutyraldehyde (TMAB-ald) and 3-N-trimethylaminopropionaldehyde (TMAP-ald) as substrates. Catalyzes the oxidation of GAB-ald more efficiently than Bet-ald. May convert acetaldehyde into acetate, thus facilitating the production of acetyl-CoA in peroxisomes under anaerobic conditions. In Oryza sativa subsp. japonica (Rice), this protein is Betaine aldehyde dehydrogenase 1 (BADH1).